A 337-amino-acid polypeptide reads, in one-letter code: Cytochrome P450 monooxygenase dpmpJ (337 aa).

A helical membrane pass occupies residues 4-24; that stretch reads LILHHPYASLAAGILLYFFCL. A glycan (N-linked (GlcNAc...) asparagine) is linked at asparagine 158.

The protein belongs to the cytochrome P450 family. Requires heme as cofactor.

It localises to the membrane. It functions in the pathway secondary metabolite biosynthesis; terpenoid biosynthesis. In terms of biological role, cytochrome P450 monooxygenase; part of the gene cluster that mediates the biosynthesis of diterpenoid pyrones. The first step of the pathway is the synthesis of the alpha-pyrone moiety by the polyketide synthase dpmpA via condensation of one acetyl-CoA starter unit with 3 malonyl-CoA units and 2 methylations. The alpha-pyrone is then combined with geranylgeranyl pyrophosphate (GGPP) formed by the GGPP synthase dpmpD through the action of the prenyltransferase dpmpC to yield a linear alpha-pyrone diterpenoid. Subsequent steps in the diterpenoid pyrone biosynthetic pathway involve the decalin core formation, which is initiated by the epoxidation of the C10-C11 olefin by the FAD-dependent oxidoreductase dpmpE, and is followed by a cyclization cascade catalyzed by the terpene cyclase dpmpB. The short chain dehydrogenase/reductase dpmpG then oxidizes the 8S hydroxy group to a ketone and the short chain dehydrogenase/reductase dpmpH reduces the ketone to the 8R hydroxy group to yield higginsianin B. Higginsianin B is further methylated by the methyltransferase dpmpI to produce the intermediate named FDDP B. The cytochrome P450 monooxygenase dpmpJ then oxidizes the C-26 methyl to primary alcohol, producing the final diterpenoid pyrone with a C-26 primary alcohol on the gamma-pyrone moiety named FDDP C. The sequence is that of Cytochrome P450 monooxygenase dpmpJ from Macrophomina phaseolina (strain MS6) (Charcoal rot fungus).